The chain runs to 177 residues: Ribosome maturation factor RimM (177 aa).

Positions 104-177 (GVDGIWADLI…IIKVKLMEGM (74 aa)) constitute a PRC barrel domain.

This sequence belongs to the RimM family. Binds ribosomal protein uS19.

Its subcellular location is the cytoplasm. Functionally, an accessory protein needed during the final step in the assembly of 30S ribosomal subunit, possibly for assembly of the head region. Essential for efficient processing of 16S rRNA. May be needed both before and after RbfA during the maturation of 16S rRNA. It has affinity for free ribosomal 30S subunits but not for 70S ribosomes. The chain is Ribosome maturation factor RimM from Magnetococcus marinus (strain ATCC BAA-1437 / JCM 17883 / MC-1).